The primary structure comprises 101 residues: Pro-corazonin (101 aa).

A signal peptide spans 1–19 (MVTNITLILTLMTLASVTA). Q20 carries the post-translational modification Pyrrolidone carboxylic acid. N30 bears the Asparagine amide mark.

Belongs to the corazonin family.

Its subcellular location is the secreted. Its function is as follows. Cardioactive peptide. Corazonin is probably involved in the physiological regulation of the heart beat. This Bombyx mori (Silk moth) protein is Pro-corazonin (crz).